Here is a 232-residue protein sequence, read N- to C-terminus: ATP-dependent dethiobiotin synthetase BioD (232 aa).

16–21 (GVGKTV) is an ATP binding site. Threonine 20 is a binding site for Mg(2+). Lysine 41 is an active-site residue. Threonine 45 contributes to the substrate binding site. Residues aspartate 52, 111–114 (EGIG), 171–172 (NQ), 200–202 (PLS), and glutamate 207 each bind ATP. Residues aspartate 52 and glutamate 111 each contribute to the Mg(2+) site.

Belongs to the dethiobiotin synthetase family. In terms of assembly, homodimer. Mg(2+) serves as cofactor.

It is found in the cytoplasm. The enzyme catalyses (7R,8S)-7,8-diammoniononanoate + CO2 + ATP = (4R,5S)-dethiobiotin + ADP + phosphate + 3 H(+). It carries out the reaction (7R,8S)-8-amino-7-(carboxyamino)nonanoate + ATP = (4R,5S)-dethiobiotin + ADP + phosphate + H(+). It participates in cofactor biosynthesis; biotin biosynthesis; biotin from 7,8-diaminononanoate: step 1/2. Its function is as follows. Catalyzes a mechanistically unusual reaction, the ATP-dependent insertion of CO2 between the N7 and N8 nitrogen atoms of 7,8-diaminopelargonic acid (DAPA, also called 7,8-diammoniononanoate) to form a ureido ring. This archaea does not encode bioA (which catalyzes the formation of the precursor for this reaction in the cannonical pathway), instead it encodes bioU, which replaces bioA and also performs the first half of the cannonical BioD reaction. Thus in this archaea BioD has a different substrate. The polypeptide is ATP-dependent dethiobiotin synthetase BioD (Haloferax mediterranei (strain ATCC 33500 / DSM 1411 / JCM 8866 / NBRC 14739 / NCIMB 2177 / R-4) (Halobacterium mediterranei)).